The primary structure comprises 158 residues: Cyclic pyranopterin monophosphate synthase (158 aa).

Residues 76–78 (LCH) and 114–115 (ME) each bind substrate. D129 is a catalytic residue.

This sequence belongs to the MoaC family. In terms of assembly, homohexamer; trimer of dimers.

It catalyses the reaction (8S)-3',8-cyclo-7,8-dihydroguanosine 5'-triphosphate = cyclic pyranopterin phosphate + diphosphate. It functions in the pathway cofactor biosynthesis; molybdopterin biosynthesis. In terms of biological role, catalyzes the conversion of (8S)-3',8-cyclo-7,8-dihydroguanosine 5'-triphosphate to cyclic pyranopterin monophosphate (cPMP). This Shewanella baltica (strain OS223) protein is Cyclic pyranopterin monophosphate synthase.